Reading from the N-terminus, the 785-residue chain is Penicillin-binding protein 1A (785 aa).

Residues 1 to 6 (MYKSLF) are Cytoplasmic-facing. A helical; Signal-anchor for type II membrane protein transmembrane segment spans residues 7–27 (FFLKIFAILILLGCSVTAYII). Residues 28–785 (YHYSHDLPDY…GISDQSQEIY (758 aa)) are Periplasmic-facing. A transglycosylase region spans residues 49 to 220 (TRIYSRDGKL…SELNPDKNYS (172 aa)). Glu87 serves as the catalytic Proton donor; for transglycosylase activity. The transpeptidase stretch occupies residues 398-711 (DVIVVEPIKD…SNVVLPIFID (314 aa)). Ser457 functions as the Acyl-ester intermediate; for transpeptidase activity in the catalytic mechanism.

It in the N-terminal section; belongs to the glycosyltransferase 51 family. This sequence in the C-terminal section; belongs to the transpeptidase family.

Its subcellular location is the cell inner membrane. It carries out the reaction [GlcNAc-(1-&gt;4)-Mur2Ac(oyl-L-Ala-gamma-D-Glu-L-Lys-D-Ala-D-Ala)](n)-di-trans,octa-cis-undecaprenyl diphosphate + beta-D-GlcNAc-(1-&gt;4)-Mur2Ac(oyl-L-Ala-gamma-D-Glu-L-Lys-D-Ala-D-Ala)-di-trans,octa-cis-undecaprenyl diphosphate = [GlcNAc-(1-&gt;4)-Mur2Ac(oyl-L-Ala-gamma-D-Glu-L-Lys-D-Ala-D-Ala)](n+1)-di-trans,octa-cis-undecaprenyl diphosphate + di-trans,octa-cis-undecaprenyl diphosphate + H(+). The enzyme catalyses Preferential cleavage: (Ac)2-L-Lys-D-Ala-|-D-Ala. Also transpeptidation of peptidyl-alanyl moieties that are N-acyl substituents of D-alanine.. It participates in cell wall biogenesis; peptidoglycan biosynthesis. Cell wall formation. Synthesis of cross-linked peptidoglycan from the lipid intermediates. The enzyme has a penicillin-insensitive transglycosylase N-terminal domain (formation of linear glycan strands) and a penicillin-sensitive transpeptidase C-terminal domain (cross-linking of the peptide subunits). This Rickettsia typhi (strain ATCC VR-144 / Wilmington) protein is Penicillin-binding protein 1A (mrcA).